We begin with the raw amino-acid sequence, 966 residues long: Leucine--tRNA ligase (966 aa).

Positions 41–51 match the 'HIGH' region motif; it reads PYLNGNLHAGH. The 'KMSKS' region signature appears at 632-636; sequence KMSKS. Residue K635 coordinates ATP.

It belongs to the class-I aminoacyl-tRNA synthetase family.

The protein resides in the cytoplasm. It catalyses the reaction tRNA(Leu) + L-leucine + ATP = L-leucyl-tRNA(Leu) + AMP + diphosphate. This is Leucine--tRNA ligase from Methanosarcina mazei (strain ATCC BAA-159 / DSM 3647 / Goe1 / Go1 / JCM 11833 / OCM 88) (Methanosarcina frisia).